Consider the following 119-residue polypeptide: Large ribosomal subunit protein bL20c (119 aa).

It belongs to the bacterial ribosomal protein bL20 family.

The protein resides in the plastid. It is found in the chloroplast. In terms of biological role, binds directly to 23S ribosomal RNA and is necessary for the in vitro assembly process of the 50S ribosomal subunit. It is not involved in the protein synthesizing functions of that subunit. The sequence is that of Large ribosomal subunit protein bL20c from Saccharum officinarum (Sugarcane).